A 23-amino-acid chain; its full sequence is Acidic phospholipase A2 Cvv-E6c (23 aa).

Requires Ca(2+) as cofactor. Post-translationally, contains 7 disulfide bonds. As to expression, expressed by the venom gland.

Its subcellular location is the secreted. The catalysed reaction is a 1,2-diacyl-sn-glycero-3-phosphocholine + H2O = a 1-acyl-sn-glycero-3-phosphocholine + a fatty acid + H(+). Its function is as follows. Snake venom phospholipase A2 (PLA2) that significantly inhibits ADP-induced platelet aggregation in platelet-rich plasma of human, rabbit and guinea pig. PLA2 catalyzes the calcium-dependent hydrolysis of the 2-acyl groups in 3-sn-phosphoglycerides. This is Acidic phospholipase A2 Cvv-E6c from Crotalus viridis viridis (Prairie rattlesnake).